Consider the following 865-residue polypeptide: Protein translocase subunit SecA (865 aa).

Residues glutamine 93, 111–115 (GEGKT), and aspartate 501 contribute to the ATP site. The Zn(2+) site is built by cysteine 841, cysteine 843, cysteine 852, and cysteine 853.

The protein belongs to the SecA family. In terms of assembly, monomer and homodimer. Part of the essential Sec protein translocation apparatus which comprises SecA, SecYEG and auxiliary proteins SecDF-YajC and YidC. Zn(2+) is required as a cofactor.

The protein localises to the cell inner membrane. It localises to the cytoplasm. The catalysed reaction is ATP + H2O + cellular proteinSide 1 = ADP + phosphate + cellular proteinSide 2.. In terms of biological role, part of the Sec protein translocase complex. Interacts with the SecYEG preprotein conducting channel. Has a central role in coupling the hydrolysis of ATP to the transfer of proteins into and across the cell membrane, serving as an ATP-driven molecular motor driving the stepwise translocation of polypeptide chains across the membrane. The chain is Protein translocase subunit SecA from Helicobacter pylori (strain J99 / ATCC 700824) (Campylobacter pylori J99).